Reading from the N-terminus, the 328-residue chain is Phospholipid scramblase 1 (328 aa).

The segment at 1–93 (MENHSKQTEA…NHPGGPGGTP (93 aa)) is proline-rich domain (PRD). Residues 1-96 (MENHSKQTEA…GGPGGTPWMP (96 aa)) are disordered. The Cytoplasmic segment spans residues 1 to 297 (MENHSKQTEA…IQFPLDLDVK (297 aa)). The short motif at 18–26 (PAGYPPPYP) is the SH3-binding 1 element. The PPxY motif motif lies at 22 to 25 (PPPY). Positions 28 to 47 (AAFQGPSDHAAYPIPQAGYQ) are enriched in low complexity. Residues 49-64 (PPGPYPGPQPGYPVPP) show a composition bias toward pro residues. Residues 56-64 (PQPGYPVPP) carry the SH3-binding 2 motif. Position 83 is a phosphotyrosine; by ABL (Tyr83). The short motif at 93-101 (PWMPAPPPP) is the SH3-binding 3 element. A Phosphothreonine; by PKC/PRKCD modification is found at Thr170. 4 S-palmitoyl cysteine lipidation sites follow: Cys193, Cys194, Cys197, and Cys198. The Nuclear localization signal motif lies at 269–275 (SKQWSGF). The chain crosses the membrane as a helical span at residues 298–314 (MKAVMLGACFLIDFMFF). Residues 315 to 328 (ERTGNEEQRSGAWQ) lie on the Extracellular side of the membrane.

This sequence belongs to the phospholipid scramblase family. As to quaternary structure, forms homooligomers in the presence of calcium. Interacts with ABL. Interacts with RELT, RELL1 and RELL2. Interacts with OXSR1 in the presence of RELT. Interacts with OCLN, TOP2A and TOP2B. Interacts with TRPC1, TRPC4 and TRPC5. Interacts with ILDR1. It depends on Ca(2+) as a cofactor. The cofactor is Mg(2+). Zn(2+) is required as a cofactor. Phosphorylation at Thr-170 by PKC/PKCD increases its phospholipid scramblase activity during both cell stimulation and apoptosis. Phosphorylated by OXSR1 in the presence of RELT. In terms of processing, palmitoylation is required for its phospholipid scramblase activity. Palmitoylation regulates its localization to the cell membrane or the nucleus; trafficking to the cell membrane is dependent upon palmitoylation whereas in the absence of palmitoylation, localizes to the nucleus. As to expression, highly expressed in kidney, lung, liver and bone marrow, slightly in spleen, heart and macrophage.

Its subcellular location is the cell membrane. It localises to the nucleus. The protein localises to the cytoplasm. The protein resides in the perinuclear region. It catalyses the reaction a 1,2-diacyl-sn-glycero-3-phosphocholine(in) = a 1,2-diacyl-sn-glycero-3-phosphocholine(out). The enzyme catalyses a 1,2-diacyl-sn-glycero-3-phosphoethanolamine(in) = a 1,2-diacyl-sn-glycero-3-phosphoethanolamine(out). The catalysed reaction is a 1,2-diacyl-sn-glycero-3-phospho-L-serine(in) = a 1,2-diacyl-sn-glycero-3-phospho-L-serine(out). Functionally, catalyzes calcium-induced ATP-independent rapid bidirectional and non-specific distribution of phospholipids (lipid scrambling or lipid flip-flop) between the inner and outer leaflet of the plasma membrane resulting in collapse of the phospholipid asymmetry which leads to phosphatidylserine externalization on the cell surface. Mediates calcium-dependent phosphatidylserine externalization and apoptosis in neurons via its association with TRPC5. Also exhibits magnesium-dependent nuclease activity against double-stranded DNA and RNA but not single-stranded DNA and can enhance DNA decatenation mediated by TOP2A. Negatively regulates FcR-mediated phagocytosis in differentiated macrophages. May contribute to cytokine-regulated cell proliferation and differentiation. The polypeptide is Phospholipid scramblase 1 (Plscr1) (Mus musculus (Mouse)).